The primary structure comprises 1221 residues: Coatomer subunit alpha (1221 aa).

9 WD repeats span residues 7-46, 49-88, 91-130, 133-172, 202-241, 243-282, 285-323, 358-399, and 528-567; these read TKAS…LLEK, EHEG…CLFT, GHKD…CIAE, GHNH…KKMT, GHDR…VDTF, GHYN…TVHM, RDHD…PLFV, PSNN…SNTV, and WDDN…TGVK. Residues 820–885 form a disordered region; sequence GVEQSTSTPT…DDGGWERDDL (66 aa). Low complexity predominate over residues 844–857; that stretch reads SQQQSSQQQQQQQQ. The WD 10 repeat unit spans residues 910–953; the sequence is PQPGPSFSMIWARNSQFAVDHIAAGSFESAMNILNSQIGAVNFD.

Oligomeric complex that consists of at least the alpha, beta, beta', gamma, delta, epsilon and zeta subunits.

Its subcellular location is the cytoplasm. It localises to the golgi apparatus membrane. The coatomer is a cytosolic protein complex that binds to dilysine motifs and reversibly associates with Golgi non-clathrin-coated vesicles, which further mediate biosynthetic protein transport from the ER, via the Golgi up to the trans Golgi network. Coatomer complex is required for budding from Golgi membranes, and is essential for the retrograde Golgi-to-ER transport of dilysine-tagged proteins. The polypeptide is Coatomer subunit alpha (copa) (Dictyostelium discoideum (Social amoeba)).